The chain runs to 234 residues: ATP synthase subunit a 1 (234 aa).

Transmembrane regions (helical) follow at residues 20–40 (ETVV…ILLT), 76–96 (LLPL…LGVI), 105–125 (DLSV…AYGV), 162–184 (LFGN…GFLA), and 195–215 (EALV…AGAM).

This sequence belongs to the ATPase A chain family. As to quaternary structure, F-type ATPases have 2 components, CF(1) - the catalytic core - and CF(0) - the membrane proton channel. CF(1) has five subunits: alpha(3), beta(3), gamma(1), delta(1), epsilon(1). CF(0) has three main subunits: a(1), b(2) and c(9-12). The alpha and beta chains form an alternating ring which encloses part of the gamma chain. CF(1) is attached to CF(0) by a central stalk formed by the gamma and epsilon chains, while a peripheral stalk is formed by the delta and b chains.

The protein resides in the cell inner membrane. In terms of biological role, key component of the proton channel; it plays a direct role in the translocation of protons across the membrane. The chain is ATP synthase subunit a 1 from Hahella chejuensis (strain KCTC 2396).